The following is a 338-amino-acid chain: MARIGSFLIILYLIYALTLCICDDDESNYGGDKGNLFPGFYRSSCPRAEEIVRSVVAKAVARETRMAASLMRLHFHDCFVQGCDGSLLLDTSGSIVTEKNSNPNSRSARGFEVVDEIKAALENECPNTVSCADALTLAARDSSVLTGGPSWMVPLGRRDSTSASLSGSNNNIPAPNNTFNTIVTRFNNQGLDLTDVVALSGSHTIGFSRCTSFRQRLYNQSGNGSPDRTLEQSYAANLRQRCPRSGGDQNLSELDINSAGRFDNSYFKNLIENMGLLNSDEVLFSSNEQSRELVKKYAEDQEEFFEQFAESMIKMGNISPLTGSSGEIRKNCRKINNS.

Positions 1-22 are cleaved as a signal peptide; that stretch reads MARIGSFLIILYLIYALTLCIC. Intrachain disulfides connect Cys-45–Cys-125, Cys-78–Cys-83, Cys-131–Cys-332, and Cys-210–Cys-242. The Proton acceptor role is filled by His-76. 5 residues coordinate Ca(2+): Asp-77, Val-80, Gly-82, Asp-84, and Ser-86. Residue Pro-173 coordinates substrate. Asn-176 carries N-linked (GlcNAc...) asparagine glycosylation. His-203 is a binding site for heme b. Thr-204 provides a ligand contact to Ca(2+). Residues Asn-219 and Asn-250 are each glycosylated (N-linked (GlcNAc...) asparagine). Ca(2+) is bound by residues Asp-255, Ser-258, and Asp-263.

Belongs to the peroxidase family. Classical plant (class III) peroxidase subfamily. The cofactor is heme b. It depends on Ca(2+) as a cofactor.

The protein localises to the secreted. It carries out the reaction 2 a phenolic donor + H2O2 = 2 a phenolic radical donor + 2 H2O. Functionally, removal of H(2)O(2), oxidation of toxic reductants, biosynthesis and degradation of lignin, suberization, auxin catabolism, response to environmental stresses such as wounding, pathogen attack and oxidative stress. These functions might be dependent on each isozyme/isoform in each plant tissue. The protein is Peroxidase 15 (PER15) of Arabidopsis thaliana (Mouse-ear cress).